We begin with the raw amino-acid sequence, 320 residues long: o-succinylbenzoate synthase (320 aa).

Lysine 133 (proton donor) is an active-site residue. 3 residues coordinate Mg(2+): aspartate 161, glutamate 190, and aspartate 213. Lysine 235 (proton acceptor) is an active-site residue.

This sequence belongs to the mandelate racemase/muconate lactonizing enzyme family. MenC type 1 subfamily. A divalent metal cation serves as cofactor.

The catalysed reaction is (1R,6R)-6-hydroxy-2-succinyl-cyclohexa-2,4-diene-1-carboxylate = 2-succinylbenzoate + H2O. It participates in quinol/quinone metabolism; 1,4-dihydroxy-2-naphthoate biosynthesis; 1,4-dihydroxy-2-naphthoate from chorismate: step 4/7. It functions in the pathway quinol/quinone metabolism; menaquinone biosynthesis. In terms of biological role, converts 2-succinyl-6-hydroxy-2,4-cyclohexadiene-1-carboxylate (SHCHC) to 2-succinylbenzoate (OSB). The sequence is that of o-succinylbenzoate synthase from Shigella sonnei (strain Ss046).